We begin with the raw amino-acid sequence, 344 residues long: DnaJ homolog subfamily C member 25 (344 aa).

A helical membrane pass occupies residues 5–25 (WVLLVALSVLFLSGRAGALTE). The J domain occupies 33–108 (VCYDVLGVSR…ETRKDYDYML (76 aa)). 2 helical membrane passes run 134–154 (IVILVSVCAVSIFQYYSWWSS) and 228–248 (ILLFQIILFPYYMFKYISWYV).

This sequence belongs to the DNAJC25 family.

The protein localises to the membrane. The chain is DnaJ homolog subfamily C member 25 (dnajc25) from Xenopus laevis (African clawed frog).